Here is a 107-residue protein sequence, read N- to C-terminus: Potassium voltage-gated channel subfamily E member 3 (107 aa).

N-linked (GlcNAc...) asparagine glycosylation is found at Asn5, Asn22, and Asn45. The disordered stretch occupies residues 31–54 (CRPGPGPGSGTGPDNQTEDHRASL). Residues 61–81 (SYMYILFVMFLFAVTVGSLIL) form a helical membrane-spanning segment. Positions 72–83 (FAVTVGSLILGY) are interaction with KCNQ1. The Cytoplasmic segment spans residues 82-103 (GYTRSRKVDKRSDPYHVYIKNR).

This sequence belongs to the potassium channel KCNE family. In terms of assembly, interacts with KCNB1. Interacts with KCNC2. Associates with KCNC4/Kv3.4. Interacts with KCNQ1; associates with a KCNQ1:KCNE3 stoichiometry of 4:4; produces a current with nearly instantaneous activation with a linear current-voltage relationship and alters membrane raft localization; affects KCNQ1 structure and gating properties.

It localises to the cell membrane. The protein localises to the cytoplasm. Its subcellular location is the perikaryon. The protein resides in the cell projection. It is found in the dendrite. It localises to the membrane raft. Its function is as follows. Ancillary protein that functions as a regulatory subunit of the voltage-gated potassium (Kv) channel complex composed of pore-forming and potassium-conducting alpha subunits and of regulatory beta subunits. KCNE3 beta subunit modulates the gating kinetics and enhances stability of the channel complex. Alters the gating of the delayed rectifier Kv channel containing KCNB1 alpha subunit. Associates with KCNC4/Kv3.4 alpha subunit to form the subthreshold Kv channel in skeletal muscle and to establish the resting membrane potential (RMP) in muscle cells. Association with KCNQ1/KCLQT1 alpha subunit may form the intestinal cAMP-stimulated potassium channel involved in chloride secretion that produces a current with nearly instantaneous activation with a linear current-voltage relationship. This chain is Potassium voltage-gated channel subfamily E member 3, found in Rattus norvegicus (Rat).